A 93-amino-acid polypeptide reads, in one-letter code: Large ribosomal subunit protein uL23cz/uL23cy (93 aa).

This sequence belongs to the universal ribosomal protein uL23 family. As to quaternary structure, part of the 50S ribosomal subunit.

Its subcellular location is the plastid. It is found in the chloroplast. Functionally, binds to 23S rRNA. This chain is Large ribosomal subunit protein uL23cz/uL23cy (rpl23-A), found in Oenothera elata subsp. hookeri (Hooker's evening primrose).